Consider the following 528-residue polypeptide: Probable histone-arginine methyltransferase CARM1 (528 aa).

Positions Glu-149 to Ser-464 constitute an SAM-dependent MTase PRMT-type domain. S-adenosyl-L-methionine-binding residues include Gln-166, Arg-175, Gly-199, Glu-221, Glu-251, and Ser-279. Positions Tyr-500–Leu-520 are enriched in low complexity. The disordered stretch occupies residues Tyr-500–Asp-528.

Belongs to the class I-like SAM-binding methyltransferase superfamily. Protein arginine N-methyltransferase family.

Its subcellular location is the nucleus. The protein localises to the cytoplasm. The catalysed reaction is L-arginyl-[protein] + 2 S-adenosyl-L-methionine = N(omega),N(omega)-dimethyl-L-arginyl-[protein] + 2 S-adenosyl-L-homocysteine + 2 H(+). Functionally, methylates (mono- and asymmetric dimethylation) the guanidino nitrogens of arginyl residues in several proteins involved in DNA packaging, transcription regulation, and mRNA stability. Recruited to promoters upon gene activation, methylates histone H3 and activates transcription via chromatin remodeling. The sequence is that of Probable histone-arginine methyltransferase CARM1 (CARM1) from Oryza sativa subsp. indica (Rice).